The primary structure comprises 258 residues: Acyl-[acyl-carrier-protein]--UDP-N-acetylglucosamine O-acyltransferase (258 aa).

The protein belongs to the transferase hexapeptide repeat family. LpxA subfamily. Homotrimer.

Its subcellular location is the cytoplasm. The enzyme catalyses a (3R)-hydroxyacyl-[ACP] + UDP-N-acetyl-alpha-D-glucosamine = a UDP-3-O-[(3R)-3-hydroxyacyl]-N-acetyl-alpha-D-glucosamine + holo-[ACP]. Its pathway is glycolipid biosynthesis; lipid IV(A) biosynthesis; lipid IV(A) from (3R)-3-hydroxytetradecanoyl-[acyl-carrier-protein] and UDP-N-acetyl-alpha-D-glucosamine: step 1/6. Its function is as follows. Involved in the biosynthesis of lipid A, a phosphorylated glycolipid that anchors the lipopolysaccharide to the outer membrane of the cell. The sequence is that of Acyl-[acyl-carrier-protein]--UDP-N-acetylglucosamine O-acyltransferase from Pseudomonas savastanoi pv. phaseolicola (strain 1448A / Race 6) (Pseudomonas syringae pv. phaseolicola (strain 1448A / Race 6)).